The following is a 100-amino-acid chain: Urease subunit gamma (100 aa).

It belongs to the urease gamma subunit family. As to quaternary structure, heterotrimer of UreA (gamma), UreB (beta) and UreC (alpha) subunits. Three heterotrimers associate to form the active enzyme.

It localises to the cytoplasm. The catalysed reaction is urea + 2 H2O + H(+) = hydrogencarbonate + 2 NH4(+). Its pathway is nitrogen metabolism; urea degradation; CO(2) and NH(3) from urea (urease route): step 1/1. The sequence is that of Urease subunit gamma from Lysinibacillus sphaericus (strain C3-41).